The following is a 140-amino-acid chain: Nucleoside diphosphate kinase (140 aa).

Positions 11, 59, 87, 93, 104, and 114 each coordinate ATP. The Pros-phosphohistidine intermediate role is filled by His-117.

The protein belongs to the NDK family. In terms of assembly, homotetramer. Mg(2+) serves as cofactor.

The protein resides in the cytoplasm. The enzyme catalyses a 2'-deoxyribonucleoside 5'-diphosphate + ATP = a 2'-deoxyribonucleoside 5'-triphosphate + ADP. It carries out the reaction a ribonucleoside 5'-diphosphate + ATP = a ribonucleoside 5'-triphosphate + ADP. Functionally, major role in the synthesis of nucleoside triphosphates other than ATP. The ATP gamma phosphate is transferred to the NDP beta phosphate via a ping-pong mechanism, using a phosphorylated active-site intermediate. The protein is Nucleoside diphosphate kinase of Roseobacter denitrificans (strain ATCC 33942 / OCh 114) (Erythrobacter sp. (strain OCh 114)).